We begin with the raw amino-acid sequence, 654 residues long: C6 finger domain transcription factor nscR (654 aa).

A DNA-binding region (zn(2)-C6 fungal-type) is located at residues 17–43 (CELCRERKVKCDKLDPCTNCSSAGVIC).

It localises to the nucleus. Transcription factor that specifically regulates the neosartoricin B biosynthesis gene cluster. This Trichophyton verrucosum (strain HKI 0517) protein is C6 finger domain transcription factor nscR.